The following is a 379-amino-acid chain: Alcohol dehydrogenase 1 (379 aa).

Zn(2+)-binding residues include C47, T49, H69, C99, C102, C105, C113, and C177. T49 and H69 together coordinate an alcohol. T49 contacts NAD(+). Residues 202–207 (GLGAVG), D226, R231, T272, V295, 295–297 (VGV), F322, and R372 each bind NAD(+).

Belongs to the zinc-containing alcohol dehydrogenase family. As to quaternary structure, homodimer. Requires Zn(2+) as cofactor.

The protein localises to the cytoplasm. It carries out the reaction a primary alcohol + NAD(+) = an aldehyde + NADH + H(+). The enzyme catalyses a secondary alcohol + NAD(+) = a ketone + NADH + H(+). In Cenchrus americanus (Pearl millet), this protein is Alcohol dehydrogenase 1 (ADH1).